The primary structure comprises 305 residues: Probable 5-dehydro-4-deoxyglucarate dehydratase (305 aa).

The protein belongs to the DapA family.

It carries out the reaction 5-dehydro-4-deoxy-D-glucarate + H(+) = 2,5-dioxopentanoate + CO2 + H2O. It participates in carbohydrate acid metabolism; D-glucarate degradation; 2,5-dioxopentanoate from D-glucarate: step 2/2. The chain is Probable 5-dehydro-4-deoxyglucarate dehydratase from Pseudomonas entomophila (strain L48).